A 1125-amino-acid polypeptide reads, in one-letter code: Angiopoietin-1 receptor (1125 aa).

The N-terminal stretch at 1–22 (MDSLAGLVLCGVSLLLSATVDG) is a signal peptide. The Extracellular portion of the chain corresponds to 23 to 748 (AMDLILINSL…PADLGGRKML (726 aa)). Cysteines 44 and 102 form a disulfide. Positions 44–123 (CIASGWRPHE…RTMKMRQQAS (80 aa)) constitute an Ig-like C2-type 1 domain. An N-linked (GlcNAc...) asparagine glycan is attached at Asn158. EGF-like domains follow at residues 210-252 (RCEA…RTCE), 254-299 (ACEP…LQCN), and 301-341 (ACQP…LQCE). Disulfide bonds link Cys211–Cys220, Cys224–Cys233, Cys227–Cys240, Cys242–Cys251, Cys255–Cys264, Cys268–Cys274, Cys280–Cys287, Cys289–Cys298, Cys302–Cys311, Cys315–Cys323, Cys317–Cys329, Cys331–Cys340, and Cys370–Cys424. One can recognise an Ig-like C2-type 2 domain in the interval 350-440 (PKIEDLPDHI…GMVEKPFNIS (91 aa)). 3 Fibronectin type-III domains span residues 447–541 (PLNA…TASI), 545–637 (PPRG…TLSD), and 642–735 (QPEN…TLSE). A helical membrane pass occupies residues 749–769 (LIAILGSAGMTCLTVLLAFLI). The Cytoplasmic portion of the chain corresponds to 770–1125 (MLQLKRANVQ…GIDCSAEEAA (356 aa)). The region spanning 825–1097 (IKFQDVIGEG…QILVSLNRML (273 aa)) is the Protein kinase domain. Residues 831 to 839 (IGEGNFGQV) and Lys856 contribute to the ATP site. Residue Tyr861 is modified to Phosphotyrosine; by autocatalysis. Asp965 serves as the catalytic Proton acceptor. Residues Tyr993, Tyr1103, and Tyr1109 each carry the phosphotyrosine; by autocatalysis modification.

The protein belongs to the protein kinase superfamily. Tyr protein kinase family. Tie subfamily. Homodimer. Heterodimer with TIE1. Interacts with ANGPT1, ANGPT2 and ANGPT4. At cell-cell contacts in quiescent cells, forms a signaling complex composed of ANGPT1 plus TEK molecules from two adjoining cells. In the absence of endothelial cell-cell contacts, interaction with ANGPT1 mediates contacts with the extracellular matrix. Interacts (tyrosine phosphorylated) with TNIP2. Interacts (tyrosine phosphorylated) with SHC1 (via SH2 domain). Interacts with PTPRB; this promotes endothelial cell-cell adhesion. Interacts with DOK2, GRB2, GRB7, GRB14, PIK3R1 and PTPN11/SHP2. Colocalizes with DOK2 at contacts with the extracellular matrix in migrating cells. Post-translationally, proteolytic processing leads to the shedding of the extracellular domain (soluble TIE-2 alias sTIE-2). In terms of processing, autophosphorylated on tyrosine residues in response to ligand binding. Autophosphorylation occurs in trans, i.e. one subunit of the dimeric receptor phosphorylates tyrosine residues on the other subunit. Autophosphorylation occurs in a sequential manner, where Tyr-993 in the kinase activation loop is phosphorylated first, followed by autophosphorylation at Tyr-1109 and at additional tyrosine residues. ANGPT1-induced phosphorylation is impaired during hypoxia, due to increased expression of ANGPT2. Phosphorylation is important for interaction with GRB14, PIK3R1 and PTPN11. Phosphorylation at Tyr-1103 is important for interaction with GRB2 and GRB7. Phosphorylation at Tyr-1109 is important for interaction with DOK2 and for coupling to downstream signal transduction pathways in endothelial cells. Dephosphorylated by PTPRB. Ubiquitinated. The phosphorylated receptor is ubiquitinated and internalized, leading to its degradation. As to expression, specifically expressed in developing vascular endothelial cells.

It is found in the cell membrane. The protein resides in the cell junction. It localises to the focal adhesion. Its subcellular location is the cytoplasm. The protein localises to the cytoskeleton. It is found in the secreted. It carries out the reaction L-tyrosyl-[protein] + ATP = O-phospho-L-tyrosyl-[protein] + ADP + H(+). Its activity is regulated as follows. Angiopoietin binding leads to receptor dimerization and activation by autophosphorylation at Tyr-993 on the kinase activation loop. Its function is as follows. Tyrosine-protein kinase that acts as a cell-surface receptor for ANGPT1, ANGPT2 and ANGPT4 and regulates angiogenesis, endothelial cell survival, proliferation, migration, adhesion and cell spreading, reorganization of the actin cytoskeleton, but also maintenance of vascular quiescence. Has anti-inflammatory effects by preventing the leakage of pro-inflammatory plasma proteins and leukocytes from blood vessels. Required for normal angiogenesis and heart development during embryogenesis. Required for post-natal hematopoiesis. After birth, activates or inhibits angiogenesis, depending on the context. Inhibits angiogenesis and promotes vascular stability in quiescent vessels, where endothelial cells have tight contacts. In quiescent vessels, ANGPT1 oligomers recruit TEK to cell-cell contacts, forming complexes with TEK molecules from adjoining cells, and this leads to preferential activation of phosphatidylinositol 3-kinase and the AKT1 signaling cascades. In migrating endothelial cells that lack cell-cell adhesions, ANGT1 recruits TEK to contacts with the extracellular matrix, leading to the formation of focal adhesion complexes, activation of PTK2/FAK and of the downstream kinases MAPK1/ERK2 and MAPK3/ERK1, and ultimately to the stimulation of sprouting angiogenesis. ANGPT1 signaling triggers receptor dimerization and autophosphorylation at specific tyrosine residues that then serve as binding sites for scaffold proteins and effectors. Signaling is modulated by ANGPT2 that has lower affinity for TEK, can promote TEK autophosphorylation in the absence of ANGPT1, but inhibits ANGPT1-mediated signaling by competing for the same binding site. Signaling is also modulated by formation of heterodimers with TIE1, and by proteolytic processing that gives rise to a soluble TEK extracellular domain. The soluble extracellular domain modulates signaling by functioning as decoy receptor for angiopoietins. TEK phosphorylates DOK2, GRB7, GRB14, PIK3R1, SHC1 and TIE1. This chain is Angiopoietin-1 receptor (TEK), found in Bos taurus (Bovine).